Consider the following 379-residue polypeptide: Homoserine O-acetyltransferase (379 aa).

Residues 52–356 (NVVMVLHALT…IRGHDGFLVE (305 aa)) form the AB hydrolase-1 domain. Catalysis depends on serine 157, which acts as the Nucleophile. Position 227 (arginine 227) interacts with substrate. Active-site residues include aspartate 320 and histidine 350. Residue aspartate 351 coordinates substrate.

The protein belongs to the AB hydrolase superfamily. MetX family. Homodimer.

Its subcellular location is the cytoplasm. It catalyses the reaction L-homoserine + acetyl-CoA = O-acetyl-L-homoserine + CoA. Its pathway is amino-acid biosynthesis; L-methionine biosynthesis via de novo pathway; O-acetyl-L-homoserine from L-homoserine: step 1/1. Functionally, transfers an acetyl group from acetyl-CoA to L-homoserine, forming acetyl-L-homoserine. The protein is Homoserine O-acetyltransferase of Mycobacterium ulcerans (strain Agy99).